The following is a 613-amino-acid chain: Dihydroxy-acid dehydratase (613 aa).

Residue D81 participates in Mg(2+) binding. C122 serves as a coordination point for [2Fe-2S] cluster. Residues D123 and K124 each coordinate Mg(2+). An N6-carboxylysine modification is found at K124. [2Fe-2S] cluster is bound at residue C195. E491 is a binding site for Mg(2+). S517 functions as the Proton acceptor in the catalytic mechanism.

Belongs to the IlvD/Edd family. Homodimer. It depends on [2Fe-2S] cluster as a cofactor. Mg(2+) is required as a cofactor.

It carries out the reaction (2R)-2,3-dihydroxy-3-methylbutanoate = 3-methyl-2-oxobutanoate + H2O. The catalysed reaction is (2R,3R)-2,3-dihydroxy-3-methylpentanoate = (S)-3-methyl-2-oxopentanoate + H2O. Its pathway is amino-acid biosynthesis; L-isoleucine biosynthesis; L-isoleucine from 2-oxobutanoate: step 3/4. The protein operates within amino-acid biosynthesis; L-valine biosynthesis; L-valine from pyruvate: step 3/4. Functionally, functions in the biosynthesis of branched-chain amino acids. Catalyzes the dehydration of (2R,3R)-2,3-dihydroxy-3-methylpentanoate (2,3-dihydroxy-3-methylvalerate) into 2-oxo-3-methylpentanoate (2-oxo-3-methylvalerate) and of (2R)-2,3-dihydroxy-3-methylbutanoate (2,3-dihydroxyisovalerate) into 2-oxo-3-methylbutanoate (2-oxoisovalerate), the penultimate precursor to L-isoleucine and L-valine, respectively. This chain is Dihydroxy-acid dehydratase, found in Vibrio atlanticus (strain LGP32) (Vibrio splendidus (strain Mel32)).